A 317-amino-acid polypeptide reads, in one-letter code: Endochitinase 3 (317 aa).

A signal peptide spans 1–19 (MFVRNALVVTGLLAALTQA). N-linked (GlcNAc...) asparagine glycosylation is found at Asn25, Asn49, and Asn169. Positions 29 to 317 (HKLTVYWGAE…NYQKEIKANL (289 aa)) constitute a GH18 domain. The Proton donor role is filled by Glu170. An N-linked (GlcNAc...) asparagine glycan is attached at Asn245.

Belongs to the glycosyl hydrolase 18 family. Chitinase class III subfamily.

It localises to the secreted. The catalysed reaction is Random endo-hydrolysis of N-acetyl-beta-D-glucosaminide (1-&gt;4)-beta-linkages in chitin and chitodextrins.. Secreted chitinase involved in the degradation of chitin, a component of the cell walls of fungi and exoskeletal elements of some animals (including worms and arthropods). Participates in the infection process and directly acts in the penetration process of the host cuticle. Involved in heat-shock adaptation. This chain is Endochitinase 3 (chi3), found in Metarhizium robertsii (strain ARSEF 23 / ATCC MYA-3075) (Metarhizium anisopliae (strain ARSEF 23)).